The following is a 243-amino-acid chain: MSKTIIIGNWKMNKTFTQTKEFFSAFNQLYIENKNKINQNLDFAVALPAINVAAFSKNTTKLELAVQNMSQFEKGAYTGEISAQMLLDLNVKYAIIGHSERRQYFKETDLDVNAKTQQAIKNNIIPVVCVGETLEEYEAQKTSQVIEYQLKNSLKDVDLSKVIVAYEPIWAIGTGKTATPEQAQQVCKFIRKQTNKNLTILYGGSVSQENIEQLLNQADINGALVGGASLKVDSFIKLLTLNK.

Residue 9–11 (NWK) coordinates substrate. Residue H98 is the Electrophile of the active site. Catalysis depends on E167, which acts as the Proton acceptor. Residues G173, S205, and 226 to 227 (GG) each bind substrate.

This sequence belongs to the triosephosphate isomerase family. In terms of assembly, homodimer.

The protein localises to the cytoplasm. The catalysed reaction is D-glyceraldehyde 3-phosphate = dihydroxyacetone phosphate. The protein operates within carbohydrate biosynthesis; gluconeogenesis. Its pathway is carbohydrate degradation; glycolysis; D-glyceraldehyde 3-phosphate from glycerone phosphate: step 1/1. Its function is as follows. Involved in the gluconeogenesis. Catalyzes stereospecifically the conversion of dihydroxyacetone phosphate (DHAP) to D-glyceraldehyde-3-phosphate (G3P). The protein is Triosephosphate isomerase of Mesomycoplasma hyorhinis (Mycoplasma hyorhinis).